The primary structure comprises 275 residues: NH(3)-dependent NAD(+) synthetase (275 aa).

50–57 (GISGGVDS) contacts ATP. Position 56 (Asp-56) interacts with Mg(2+). A deamido-NAD(+)-binding site is contributed by Arg-147. Thr-167 contacts ATP. Glu-172 is a Mg(2+) binding site. Residues Lys-180 and Asp-187 each coordinate deamido-NAD(+). The ATP site is built by Lys-196 and Thr-218. 267–268 (HK) is a binding site for deamido-NAD(+).

This sequence belongs to the NAD synthetase family. As to quaternary structure, homodimer.

The enzyme catalyses deamido-NAD(+) + NH4(+) + ATP = AMP + diphosphate + NAD(+) + H(+). Its pathway is cofactor biosynthesis; NAD(+) biosynthesis; NAD(+) from deamido-NAD(+) (ammonia route): step 1/1. In terms of biological role, catalyzes the ATP-dependent amidation of deamido-NAD to form NAD. Uses ammonia as a nitrogen source. This chain is NH(3)-dependent NAD(+) synthetase, found in Ectopseudomonas mendocina (strain ymp) (Pseudomonas mendocina).